A 504-amino-acid chain; its full sequence is MFGDRQRPMVLVLGLGESGLAIARWCARHGCRLRVADTRETPPNLAALTAAGVDFEFVGGAFSPALVDGGIELVALSPGLSPLAEDLAPLVAAARERGIPVWGELEFFAQALAALGANGYAPKVIAITGTNGKTTTTSLAGLLCERAGKKVAVAGNISPAMLDKLTEAIDAAALPDVWVLELSSFQLDTAHTFAPDAATILNITQDHLDWHGGFAAYAAAKGRVFGPRTVRVLNRDDAEVMRFAPPAAAADAPRAVTFGLNEPAADGDYGLLRENGIAWLVEAIDRDGADAPAAPSRRRKQEAANPPDIALKRLMPADALRIRGLHNAANALAAYALARAIGLPAAPLLHGLREYRGEPHRVEVIATLDGVDYVDDSKGTNVGATVAALDGLAQRAVLIAGGDGKGQDFEPLAAPVARWCRAVMLIGRDAPALREALADTGVPLADHATLEAAVRAASALAQPGDAVLLSPACASLDMFRNYAHRADVFRSAVEDIALEKGTTL.

Residue G129–T135 participates in ATP binding.

The protein belongs to the MurCDEF family.

The protein localises to the cytoplasm. The enzyme catalyses UDP-N-acetyl-alpha-D-muramoyl-L-alanine + D-glutamate + ATP = UDP-N-acetyl-alpha-D-muramoyl-L-alanyl-D-glutamate + ADP + phosphate + H(+). The protein operates within cell wall biogenesis; peptidoglycan biosynthesis. Functionally, cell wall formation. Catalyzes the addition of glutamate to the nucleotide precursor UDP-N-acetylmuramoyl-L-alanine (UMA). The polypeptide is UDP-N-acetylmuramoylalanine--D-glutamate ligase (Burkholderia mallei (strain NCTC 10247)).